The primary structure comprises 24 residues: Brevinin-1Ba (24 aa).

Residues cysteine 18 and cysteine 24 are joined by a disulfide bond.

As to expression, expressed by the skin glands.

It is found in the secreted. Antibacterial activity against Gram-positive bacterium S.aureus. The protein is Brevinin-1Ba of Lithobates berlandieri (Rio Grande leopard frog).